Here is a 358-residue protein sequence, read N- to C-terminus: Putative purine permease 12 (358 aa).

The next 10 helical transmembrane spans lie at 29 to 49 (WILV…SVLL), 62 to 82 (WIST…LSLL), 100 to 120 (LVWI…LYSV), 128 to 148 (STYS…YYYI), 153 to 173 (ITCL…LVSL), 189 to 209 (LIGC…LSLM), 235 to 255 (VASC…LLSV), 280 to 299 (LGCV…FSNL), 300 to 316 (ISTL…IAVF), and 320 to 340 (LTEV…FYIY).

The protein belongs to the purine permeases (TC 2.A.7.14) family.

It is found in the membrane. The sequence is that of Putative purine permease 12 (PUP12) from Arabidopsis thaliana (Mouse-ear cress).